Here is a 44-residue protein sequence, read N- to C-terminus: pyr operon leader peptide (44 aa).

The chain is pyr operon leader peptide (pyrL) from Escherichia coli O157:H7.